Reading from the N-terminus, the 104-residue chain is MSNRDLFAELSSALVEAKQHSEGKLTLKTHHVNDVGELNISPDEIVSIREQFNMSRGVFARLLHTSSRTLENWEQGRSVPNGQAVTLLKLVQRHPETLSHIAEL.

Positions 45 to 98 (IVSIREQFNMSRGVFARLLHTSSRTLENWEQGRSVPNGQAVTLLKLVQRHPETL) constitute an HTH cro/C1-type domain. The segment at residues 56-75 (RGVFARLLHTSSRTLENWEQ) is a DNA-binding region (H-T-H motif).

In terms of biological role, antitoxin component of a type II toxin-antitoxin (TA) system that counteracts the effect of the HigB-2 toxin. Binds to its own promoter and regulates transcription of the higB-2/higA-2 operon. The protein is Antitoxin HigA-2 (higA-2) of Vibrio cholerae serotype O1 (strain ATCC 39315 / El Tor Inaba N16961).